Here is a 1281-residue protein sequence, read N- to C-terminus: Dynactin subunit 1 (1281 aa).

The interval 1–25 is disordered; sequence MAQSKRHVYSRTPSGSRMSAEASAR. The 43-residue stretch at 48–90 folds into the CAP-Gly domain; sequence GATLFATGKWVGVILDEAKGKNDGTVQGRKYFTCDEGHGIFVR. The tract at residues 99–225 is disordered; that stretch reads DGADTTSPET…EEEGLRAQVR (127 aa). The span at 102-114 shows a compositional bias: polar residues; it reads DTTSPETPDSSAS. Phosphothreonine is present on residues T108, T145, T146, and T147. Residues 129–152 are compositionally biased toward basic residues; it reads SKLRGPKPKKAPTARKTTTRRPKP. Over residues 161-205 the composition is skewed to low complexity; the sequence is AGASSSLGPSGSASAGELSSSEPSTPAQTPLAAPIIPTPALTSPG. 2 positions are modified to phosphoserine: S179 and S212. Positions 214-225 are enriched in basic and acidic residues; it reads SKEEEGLRAQVR. Coiled-coil stretches lie at residues 217–540 and 952–1043; these read EEGL…QQEA and IKEL…QSKR. Residues 911 to 1281 form an interaction with HPS6 region; the sequence is EYDAERPPSK…LHQLHDRLIS (371 aa). A disordered region spans residues 1065–1084; it reads GEEQQRGGAPGQAPGIVPGP.

Belongs to the dynactin 150 kDa subunit family. In terms of assembly, monomer and homodimer. Subunit of dynactin, a multiprotein complex part of a tripartite complex with dynein and a adapter, such as BICDL1, BICD2 or HOOK3. The dynactin complex is built around ACTR1A/ACTB filament and consists of an actin-related filament composed of a shoulder domain, a pointed end and a barbed end. Its length is defined by its flexible shoulder domain. The soulder is composed of 2 DCTN1 subunits, 4 DCTN2 and 2 DCTN3. DCTN1/p150(glued) binds directly to microtubules and to cytoplasmic dynein. The 4 DCNT2 (via N-terminus) bind the ACTR1A filament and act as molecular rulers to determine the length. The pointed end is important for binding dynein-dynactin cargo adapters. Consists of 4 subunits: ACTR10, DCNT4, DCTN5 and DCTN6. The barbed end is composed of a CAPZA1:CAPZB heterodimers, which binds ACTR1A/ACTB filament and dynactin and stabilizes dynactin. Interacts with the C-terminus of MAPRE1, MAPRE2 and MAPRE3. Interacts (via C-terminus) with SNX6. Interacts with CLN3, DYNAP, ECPAS and FBXL5. Interacts with MISP; this interaction regulates its distribution at the cell cortex. Interacts with CEP131. Interacts with CEP126. Interacts with CLIP1. Interacts with dynein intermediate chain and dynein heavy chain. Interacts with PLK1 (via POLO-box domain). Interacts with TBCB. Binds preferentially to tyrosinated microtubules than to detyrosinated microtubules. Interacts with PARD6A. Interacts with HPS6. Interacts with KIF3A. Interacts with BICD2. Interacts with DST (isoform 9). Interacts with DST (isoform 1). Identified in a complex with MREG and RILP. Interacts with BCCIP (isoform 2/alpha). Interacts with DCDC1. Interacts with AKNA. Interacts with DYNC1I2. Interacts with RUFY3 and RUFY4. Ubiquitinated by a SCF complex containing FBXL5, leading to its degradation by the proteasome. In terms of processing, phosphorylation by SLK at Thr-145, Thr-146 and Thr-147 targets DCTN1 to the centrosome. It is uncertain if SLK phosphorylates all three threonines or one or two of them. PLK1-mediated phosphorylation at Ser-179 is essential for its localization in the nuclear envelope, promotes its dissociation from microtubules during early mitosis and positively regulates nuclear envelope breakdown during prophase.

The protein localises to the cytoplasm. It is found in the cytoskeleton. Its subcellular location is the microtubule organizing center. It localises to the centrosome. The protein resides in the centriole. The protein localises to the spindle. It is found in the nucleus envelope. Its subcellular location is the cell cortex. Its function is as follows. Part of the dynactin complex that activates the molecular motor dynein for ultra-processive transport along microtubules. Plays a key role in dynein-mediated retrograde transport of vesicles and organelles along microtubules by recruiting and tethering dynein to microtubules. Binds to both dynein and microtubules providing a link between specific cargos, microtubules and dynein. Essential for targeting dynein to microtubule plus ends, recruiting dynein to membranous cargos and enhancing dynein processivity (the ability to move along a microtubule for a long distance without falling off the track). Can also act as a brake to slow the dynein motor during motility along the microtubule. Can regulate microtubule stability by promoting microtubule formation, nucleation and polymerization and by inhibiting microtubule catastrophe in neurons. Inhibits microtubule catastrophe by binding both to microtubules and to tubulin, leading to enhanced microtubule stability along the axon. Plays a role in metaphase spindle orientation. Plays a role in centriole cohesion and subdistal appendage organization and function. Its recruitment to the centriole in a KIF3A-dependent manner is essential for the maintenance of centriole cohesion and the formation of subdistal appendage. Also required for microtubule anchoring at the mother centriole. Plays a role in primary cilia formation. This Sus scrofa (Pig) protein is Dynactin subunit 1 (DCTN1).